The following is a 274-amino-acid chain: NAD kinase (274 aa).

The active-site Proton acceptor is aspartate 60. Residues 60-61, lysine 65, 127-128, and arginine 152 contribute to the NAD(+) site; these read DG and NE.

It belongs to the NAD kinase family. It depends on a divalent metal cation as a cofactor.

The protein resides in the cytoplasm. It catalyses the reaction NAD(+) + ATP = ADP + NADP(+) + H(+). In terms of biological role, involved in the regulation of the intracellular balance of NAD and NADP, and is a key enzyme in the biosynthesis of NADP. Catalyzes specifically the phosphorylation on 2'-hydroxyl of the adenosine moiety of NAD to yield NADP. The polypeptide is NAD kinase (Mycoplasmoides gallisepticum (strain R(low / passage 15 / clone 2)) (Mycoplasma gallisepticum)).